The following is a 208-amino-acid chain: Methyl-CpG-binding domain protein 3-like 5 (208 aa).

Belongs to the MBD3L family.

The sequence is that of Methyl-CpG-binding domain protein 3-like 5 (MBD3L5) from Homo sapiens (Human).